A 448-amino-acid polypeptide reads, in one-letter code: Beta-glucosidase B (448 aa).

Glu-167 functions as the Proton donor in the catalytic mechanism. Glu-356 acts as the Nucleophile in catalysis.

This sequence belongs to the glycosyl hydrolase 1 family.

The catalysed reaction is Hydrolysis of terminal, non-reducing beta-D-glucosyl residues with release of beta-D-glucose.. The protein is Beta-glucosidase B (bglB) of Paenibacillus polymyxa (Bacillus polymyxa).